A 145-amino-acid chain; its full sequence is Deoxyuridine 5'-triphosphate nucleotidohydrolase (145 aa).

Substrate is bound by residues 65–67 (RSG), Asn78, and 82–84 (TID).

It belongs to the dUTPase family. Requires Mg(2+) as cofactor.

It carries out the reaction dUTP + H2O = dUMP + diphosphate + H(+). Its pathway is pyrimidine metabolism; dUMP biosynthesis; dUMP from dCTP (dUTP route): step 2/2. In terms of biological role, this enzyme is involved in nucleotide metabolism: it produces dUMP, the immediate precursor of thymidine nucleotides and it decreases the intracellular concentration of dUTP so that uracil cannot be incorporated into DNA. This Clostridium tetani (strain Massachusetts / E88) protein is Deoxyuridine 5'-triphosphate nucleotidohydrolase.